A 724-amino-acid polypeptide reads, in one-letter code: Catalase-peroxidase (724 aa).

Residues 98–226 constitute a cross-link (tryptophyl-tyrosyl-methioninium (Trp-Tyr) (with M-252)); the sequence is WHAAGTYRIA…LAAVMMGLIY (129 aa). H99 (proton acceptor) is an active-site residue. Residues 226–252 constitute a cross-link (tryptophyl-tyrosyl-methioninium (Tyr-Met) (with W-98)); that stretch reads YVNPEGVDGNPDPLKTAHDIRVTFERM. H267 is a binding site for heme b.

It belongs to the peroxidase family. Peroxidase/catalase subfamily. Homodimer or homotetramer. Requires heme b as cofactor. In terms of processing, formation of the three residue Trp-Tyr-Met cross-link is important for the catalase, but not the peroxidase activity of the enzyme.

The catalysed reaction is H2O2 + AH2 = A + 2 H2O. It carries out the reaction 2 H2O2 = O2 + 2 H2O. Bifunctional enzyme with both catalase and broad-spectrum peroxidase activity. This chain is Catalase-peroxidase, found in Psychromonas ingrahamii (strain DSM 17664 / CCUG 51855 / 37).